The sequence spans 448 residues: D-inositol 3-phosphate glycosyltransferase (448 aa).

Residues 1-21 (MAEQHTGVGRQRGARPWPRPR) form a disordered region. Residue H29 participates in 1D-myo-inositol 3-phosphate binding. UDP-N-acetyl-alpha-D-glucosamine contacts are provided by residues 35 to 36 (QP) and G43. 1D-myo-inositol 3-phosphate contacts are provided by residues 40 to 45 (DAGGMN), K98, Y131, T155, and R175. UDP-N-acetyl-alpha-D-glucosamine is bound by residues R255, K260, and Q321. The Mg(2+) site is built by Y330, R331, and A333. Positions 343 and 351 each coordinate UDP-N-acetyl-alpha-D-glucosamine. T357 is a binding site for Mg(2+).

This sequence belongs to the glycosyltransferase group 1 family. MshA subfamily. Homodimer.

The enzyme catalyses 1D-myo-inositol 3-phosphate + UDP-N-acetyl-alpha-D-glucosamine = 1D-myo-inositol 2-acetamido-2-deoxy-alpha-D-glucopyranoside 3-phosphate + UDP + H(+). Catalyzes the transfer of a N-acetyl-glucosamine moiety to 1D-myo-inositol 3-phosphate to produce 1D-myo-inositol 2-acetamido-2-deoxy-glucopyranoside 3-phosphate in the mycothiol biosynthesis pathway. The sequence is that of D-inositol 3-phosphate glycosyltransferase from Salinispora arenicola (strain CNS-205).